The primary structure comprises 363 residues: Peptide chain release factor 1 (363 aa).

The residue at position 237 (Q237) is an N5-methylglutamine. Residues 284 to 296 (EDEKRRSAEESTR) are compositionally biased toward basic and acidic residues. Positions 284–305 (EDEKRRSAEESTRRSLVASGDR) are disordered.

It belongs to the prokaryotic/mitochondrial release factor family. Post-translationally, methylated by PrmC. Methylation increases the termination efficiency of RF1.

It localises to the cytoplasm. Its function is as follows. Peptide chain release factor 1 directs the termination of translation in response to the peptide chain termination codons UAG and UAA. In Shewanella baltica (strain OS195), this protein is Peptide chain release factor 1.